Reading from the N-terminus, the 123-residue chain is Small ribosomal subunit protein uS12 (123 aa).

Aspartate 90 is modified (3-methylthioaspartic acid).

The protein belongs to the universal ribosomal protein uS12 family. In terms of assembly, part of the 30S ribosomal subunit. Contacts proteins S8 and S17. May interact with IF1 in the 30S initiation complex.

In terms of biological role, with S4 and S5 plays an important role in translational accuracy. Interacts with and stabilizes bases of the 16S rRNA that are involved in tRNA selection in the A site and with the mRNA backbone. Located at the interface of the 30S and 50S subunits, it traverses the body of the 30S subunit contacting proteins on the other side and probably holding the rRNA structure together. The combined cluster of proteins S8, S12 and S17 appears to hold together the shoulder and platform of the 30S subunit. The protein is Small ribosomal subunit protein uS12 of Ehrlichia ruminantium (strain Gardel).